Here is a 618-residue protein sequence, read N- to C-terminus: Sulfite reductase [NADPH] flavoprotein alpha-component (618 aa).

A Flavodoxin-like domain is found at 64–202 (VTLISASQTG…QAQQWRQQVV (139 aa)). Residues 70 to 75 (SQTGNA), 117 to 120 (STQG), and 153 to 162 (LGDTSYEHFC) contribute to the FMN site. One can recognise an FAD-binding FR-type domain in the interval 253-467 (TAPLTAQLSV…IEHNDNFRLP (215 aa)). Residues Thr-341, Lys-375, 405-408 (RLYS), 423-425 (TVG), Tyr-429, and 438-441 (GGAS) each bind FAD. NADP(+) is bound by residues 538–539 (SR), 544–548 (KIYVQ), and Asp-580. FAD is bound at residue Tyr-618.

Belongs to the NADPH-dependent sulphite reductase flavoprotein subunit CysJ family. This sequence in the N-terminal section; belongs to the flavodoxin family. It in the C-terminal section; belongs to the flavoprotein pyridine nucleotide cytochrome reductase family. As to quaternary structure, alpha(8)-beta(8). The alpha component is a flavoprotein, the beta component is a hemoprotein. The cofactor is FAD. FMN serves as cofactor.

It carries out the reaction hydrogen sulfide + 3 NADP(+) + 3 H2O = sulfite + 3 NADPH + 4 H(+). It functions in the pathway sulfur metabolism; hydrogen sulfide biosynthesis; hydrogen sulfide from sulfite (NADPH route): step 1/1. In terms of biological role, component of the sulfite reductase complex that catalyzes the 6-electron reduction of sulfite to sulfide. This is one of several activities required for the biosynthesis of L-cysteine from sulfate. The flavoprotein component catalyzes the electron flow from NADPH -&gt; FAD -&gt; FMN to the hemoprotein component. The chain is Sulfite reductase [NADPH] flavoprotein alpha-component from Yersinia pseudotuberculosis serotype I (strain IP32953).